A 383-amino-acid polypeptide reads, in one-letter code: Probable assembly chaperone of rpl4 (383 aa).

The segment covering Met-1–Ser-12 has biased composition (basic residues). Residues Met-1–Glu-33 are disordered. TPR repeat units follow at residues Pro-35–Asn-68, Leu-73–Gly-106, Ala-116–Ile-147, and Pro-193–Leu-226. A disordered region spans residues Asn-345–Ser-383. Acidic residues predominate over residues Glu-350 to Ser-374.

It belongs to the ACL4 family.

Its subcellular location is the cytoplasm. It is found in the nucleus. Functionally, acts as a chaperone for the L4 ribosomal subunit, required for hierarchical ribosome assembly. Shields ribosomal protein L4 until timely release and insertion into the pre-ribosome is possible, once ribosomal protein L18 is present. The polypeptide is Probable assembly chaperone of rpl4 (Emericella nidulans (strain FGSC A4 / ATCC 38163 / CBS 112.46 / NRRL 194 / M139) (Aspergillus nidulans)).